A 280-amino-acid polypeptide reads, in one-letter code: 4-diphosphocytidyl-2-C-methyl-D-erythritol kinase (280 aa).

Lys8 is an active-site residue. 91-101 contributes to the ATP binding site; the sequence is PVAAGLAGGST. Residue Asp133 is part of the active site.

This sequence belongs to the GHMP kinase family. IspE subfamily.

The enzyme catalyses 4-CDP-2-C-methyl-D-erythritol + ATP = 4-CDP-2-C-methyl-D-erythritol 2-phosphate + ADP + H(+). Its pathway is isoprenoid biosynthesis; isopentenyl diphosphate biosynthesis via DXP pathway; isopentenyl diphosphate from 1-deoxy-D-xylulose 5-phosphate: step 3/6. In terms of biological role, catalyzes the phosphorylation of the position 2 hydroxy group of 4-diphosphocytidyl-2C-methyl-D-erythritol. This chain is 4-diphosphocytidyl-2-C-methyl-D-erythritol kinase, found in Clostridium botulinum (strain Okra / Type B1).